A 218-amino-acid polypeptide reads, in one-letter code: Ribose-5-phosphate isomerase A (218 aa).

Residues 28–31 (SGST), 81–84 (DGAD), and 94–97 (KGGG) each bind substrate. The active-site Proton acceptor is glutamate 103. Lysine 121 provides a ligand contact to substrate.

This sequence belongs to the ribose 5-phosphate isomerase family. As to quaternary structure, homodimer.

It carries out the reaction aldehydo-D-ribose 5-phosphate = D-ribulose 5-phosphate. It functions in the pathway carbohydrate degradation; pentose phosphate pathway; D-ribose 5-phosphate from D-ribulose 5-phosphate (non-oxidative stage): step 1/1. Catalyzes the reversible conversion of ribose-5-phosphate to ribulose 5-phosphate. The sequence is that of Ribose-5-phosphate isomerase A from Dichelobacter nodosus (strain VCS1703A).